The chain runs to 349 residues: Anthranilate phosphoribosyltransferase (349 aa).

Residues Gly-82, Gly-85–Asp-86, Asn-92–Ser-95, Lys-110–Gly-118, and Ser-122 contribute to the 5-phospho-alpha-D-ribose 1-diphosphate site. An anthranilate-binding site is contributed by Gly-82. Mg(2+) is bound at residue Ser-94. Asn-113 lines the anthranilate pocket. Anthranilate is bound at residue Arg-168. Mg(2+)-binding residues include Asp-227 and Glu-228.

The protein belongs to the anthranilate phosphoribosyltransferase family. In terms of assembly, homodimer. It depends on Mg(2+) as a cofactor.

The enzyme catalyses N-(5-phospho-beta-D-ribosyl)anthranilate + diphosphate = 5-phospho-alpha-D-ribose 1-diphosphate + anthranilate. Its pathway is amino-acid biosynthesis; L-tryptophan biosynthesis; L-tryptophan from chorismate: step 2/5. In terms of biological role, catalyzes the transfer of the phosphoribosyl group of 5-phosphorylribose-1-pyrophosphate (PRPP) to anthranilate to yield N-(5'-phosphoribosyl)-anthranilate (PRA). This Pseudomonas paraeruginosa (strain DSM 24068 / PA7) (Pseudomonas aeruginosa (strain PA7)) protein is Anthranilate phosphoribosyltransferase.